The sequence spans 293 residues: Small ribosomal subunit protein uS5 (293 aa).

A disordered region spans residues 1–55; that stretch reads MADDAGAAGGPGGPGGPGLGGRGGFRGGFGSGLRGRGRGRGRGRGRGRGARGGKA. Residue Ala2 is modified to N-acetylalanine. Over residues 7-34 the composition is skewed to gly residues; that stretch reads AAGGPGGPGGPGLGGRGGFRGGFGSGLR. 14 consecutive repeat copies span residues 9 to 11, 12 to 14, 15 to 17, 22 to 25, 26 to 29, 34 to 35, 36 to 37, 38 to 39, 40 to 41, 42 to 43, 44 to 45, 46 to 47, 48 to 49, and 51 to 52. The interval 9 to 17 is 3 X 3 AA tandem repeats of G-G-P; that stretch reads GGPGGPGGP. The segment at 22 to 29 is 2 X 4 AA tandem repeats of R-G-G-F; the sequence is RGGFRGGF. Residues 34–52 are 9 X 2 AA tandem repeats of R-G; sequence RGRGRGRGRGRGRGRGARG. The span at 35–51 shows a compositional bias: basic residues; that stretch reads GRGRGRGRGRGRGRGAR. Glycyl lysine isopeptide (Lys-Gly) (interchain with G-Cter in ubiquitin) cross-links involve residues Lys54 and Lys58. In terms of domain architecture, S5 DRBM spans 102 to 165; that stretch reads LKDEVLKIMP…ILAKLSIVPV (64 aa). Thr252 is modified (phosphothreonine). The residue at position 263 (Lys263) is an N6-acetyllysine. At Ser264 the chain carries Phosphoserine. A Phosphothreonine modification is found at Thr270. Lys275 is subject to N6-acetyllysine; alternate. Residue Lys275 forms a Glycyl lysine isopeptide (Lys-Gly) (interchain with G-Cter in SUMO1); alternate linkage. Residue Lys275 forms a Glycyl lysine isopeptide (Lys-Gly) (interchain with G-Cter in SUMO2); alternate linkage. A Glycyl lysine isopeptide (Lys-Gly) (interchain with G-Cter in ubiquitin); alternate cross-link involves residue Lys275. Phosphoserine is present on Ser281.

It belongs to the universal ribosomal protein uS5 family. In terms of assembly, component of the small ribosomal subunit. Interacts with zinc finger protein ZNF277 (via zinc-finger domains); the interaction is direct; the interaction is extra-ribosomal. Interaction with ZNF277 competes with the binding of RPS2 to protein arginine methyltransferase PRMT3. Post-translationally, citrullinated by PADI4 in the Arg/Gly-rich region. In terms of processing, asymmetric arginine dimethylation by PRMT3 occurs at multiple sites in the Arg/Gly-rich region. Monoubiquitinated at Lys-54 and Lys-58 by RNF10 when a ribosome has stalled during translation, leading to its degradation by the proteasome. Deubiquitinated at Lys-54 and Lys-58 by USP10, preventing degradation by the proteasome and promoting 40S ribosome subunit recycling following ribosome dissociation.

Its subcellular location is the cytoplasm. The protein localises to the nucleus. It localises to the nucleolus. Its function is as follows. Component of the ribosome, a large ribonucleoprotein complex responsible for the synthesis of proteins in the cell. The small ribosomal subunit (SSU) binds messenger RNAs (mRNAs) and translates the encoded message by selecting cognate aminoacyl-transfer RNA (tRNA) molecules. The large subunit (LSU) contains the ribosomal catalytic site termed the peptidyl transferase center (PTC), which catalyzes the formation of peptide bonds, thereby polymerizing the amino acids delivered by tRNAs into a polypeptide chain. The nascent polypeptides leave the ribosome through a tunnel in the LSU and interact with protein factors that function in enzymatic processing, targeting, and the membrane insertion of nascent chains at the exit of the ribosomal tunnel. Plays a role in the assembly and function of the 40S ribosomal subunit. Mutations in this protein affects the control of translational fidelity. Involved in nucleolar processing of pre-18S ribosomal RNA and ribosome assembly. The polypeptide is Small ribosomal subunit protein uS5 (Rps2) (Rattus norvegicus (Rat)).